Here is a 402-residue protein sequence, read N- to C-terminus: Proline-rich protein 25 (402 aa).

Disordered regions lie at residues 1–29, 109–255, and 337–371; these read MART…AAAH, TVPG…MVGS, and EAAQ…CPGR. The segment covering 345-355 has biased composition (low complexity); the sequence is RRTAPPRRTAS. A compositionally biased stretch (pro residues) spans 356-367; it reads PEPPAPGAPLPA.

The polypeptide is Proline-rich protein 25 (PRR25) (Homo sapiens (Human)).